An 858-amino-acid chain; its full sequence is MSASVAEPPPALSRKAEFKAAKAELLARFKSANHVTPLMHALSRATDDALRSLWQECGLPATLALVAVGGFGRGELSPHSDVDILVLLPDAHASELDERIERFIGMAWDLGLEIGSSVRTVGQCIEEASHDVTVQTSLLEARRIVGSTALFERFMLRYREALDARAFFQAKVLEMRQRHAKFQDTPYSLEPNVKESPGGLRDLQTILWIARAAGFGSSWRELDTRGLITDREARELRRNEGFLKTLRARLHVIAGRRQDILVFDLQTQAAESFGYQPTSAKRASEQLMRRYYWAAKAVTQLATILIQNIEAQLFPATSGVTRVLSPGRFVEKQGMLEIAADDVFERHPDAILEAFLLYEATRGVKGLSARTLRALYNSRDVMNNAWRRDPRNRRTFMQILQQPEGITHAFRLMNQTSVLGRYLLNFRRIVGQMQHDLYHVYTVDQHILMVLRNIRRFAVAEHAHEYPFCSQLIVNFERPWVLYVAALFHDIAKGRGGDHSALGMADARRFCREHGIEGDDAALVVWLVQHHLTMSQVAQKQDTSDPVVIKRFAELVGSERRLTALYLLTVADIRGTSPKVWNTWKGKLLEDLYRATLAVLGGAQPDAHSELKTRQEEALALLRLETVPPDAHRALWDQLDVGYFLRHDAADIAWQTRVLYRHVAADTAIVRARPSPVGDALQVLVYVKDRSDLFAGICAYFDRNGLSVLDARVNTTRHGYALDNFIVTQTEHDVQYRDIANLVEQQLAARLAESAPLPEPSKGRLSRLSRTFPITPRVDLRADERGQYYILSVSANDRPGLLYSIARVLAEHRVGVHAARINTLGERVEDVFMLDGTGLSDNRLQIQVETELLRAIAV.

The uridylyltransferase stretch occupies residues 1-324 (MSASVAEPPP…PATSGVTRVL (324 aa)). Residues 325–681 (SPGRFVEKQG…ARPSPVGDAL (357 aa)) are uridylyl-removing. The HD domain occupies 443–565 (VDQHILMVLR…VGSERRLTAL (123 aa)). ACT domains follow at residues 682–761 (QVLV…PEPS) and 790–858 (ILSV…AIAV).

Belongs to the GlnD family. Requires Mg(2+) as cofactor.

It catalyses the reaction [protein-PII]-L-tyrosine + UTP = [protein-PII]-uridylyl-L-tyrosine + diphosphate. It carries out the reaction [protein-PII]-uridylyl-L-tyrosine + H2O = [protein-PII]-L-tyrosine + UMP + H(+). Its activity is regulated as follows. Uridylyltransferase (UTase) activity is inhibited by glutamine, while glutamine activates uridylyl-removing (UR) activity. Functionally, modifies, by uridylylation and deuridylylation, the PII regulatory proteins (GlnB and homologs), in response to the nitrogen status of the cell that GlnD senses through the glutamine level. Under low glutamine levels, catalyzes the conversion of the PII proteins and UTP to PII-UMP and PPi, while under higher glutamine levels, GlnD hydrolyzes PII-UMP to PII and UMP (deuridylylation). Thus, controls uridylylation state and activity of the PII proteins, and plays an important role in the regulation of nitrogen assimilation and metabolism. This Burkholderia pseudomallei (strain K96243) protein is Bifunctional uridylyltransferase/uridylyl-removing enzyme.